A 971-amino-acid polypeptide reads, in one-letter code: MASNNVAQFAAELKMPAGVLLEQLQAAGVQKASEDDALSEADKARLLDHLRKSHGATDGDKRKITLTRKHTSEIKQSDATGKARTIQVEVRKKRTFVKRDDVAEGAEQGQAQVAEADDDAELKRREEEARREAELLEKQAQELRERQERLEREEAERRAREEAAEAQRRRAEEEAAAKRAAAAAVEAQQVAAQQAAEAQQETAGAQSAQDEARAAAERAAQREAAKKAEDAAREAADKTRAEQEEIRKRREAAEAEARAIREMMNTPRKAMVKAVEPPKPVEPPKPVEAKGTLHKPAKPAGASAARPAVKKPAGAAPATTAPAGAGDRNKKPGGGKGGWQDDAAKRRGIKTRGDSSGGVDRGWRGGPKGRGRHQDSASTFQAPTEPIVREVHVPETVSVADLAHKMSIKASEVIKVMMKMGQMVTINQVLDQETAMIVVEELGHRAVAAKLDDPEALLVEGETTTDAEQLPRPPVVTVMGHVDHGKTSLLDHIRRAKVAAGEAGGITQHIGAYHVETPRGVITFLDTPGHEAFTAMRARGAKATDIVVLVVAADDGVMPQTKEAIAHAKAGGVPIVVAINKIDKPEANPDRVKQELVAEGVVPEEYGGDSPFVPVSAKTGVGIDDLLENVLLQAEVLELKAPIEAPAKGIVIEAKLDKGKGPVATILVQSGTLNRGDVVLAGSAYGRVRAMLDENGKPTKEAGPSIPVEIQGLSEVPGAGEEVIVLPDERKAREIALFRQGKFRDVKLAKQQAAKLESMLEQMGEGEVQNLPLIIKADVQGSQEALVQSLLKLSTDEVRVQIVHSAVGGISENDVNLATASKAVIIGFNTRADAQARKLAESNGIDIRYYNIIYDAVDEVKAAMSGMLAPEKREVITGMVEVRQVFKVPKIGTVAGCMVTDGIVKRSSSVRVLRNNVVIFTGELESLKRFKDDVKEVKQGFECGMSVKNFNDVTEGDQFEVFEVTEVARTL.

The span at 49–63 (HLRKSHGATDGDKRK) shows a compositional bias: basic and acidic residues. Disordered regions lie at residues 49–86 (HLRKSHGATDGDKRKITLTRKHTSEIKQSDATGKARTI) and 101–385 (DVAE…APTE). Over residues 105–114 (GAEQGQAQVA) the composition is skewed to low complexity. The span at 121–177 (ELKRREEEARREAELLEKQAQELRERQERLEREEAERRAREEAAEAQRRRAEEEAAA) shows a compositional bias: basic and acidic residues. A compositionally biased stretch (low complexity) spans 178–209 (KRAAAAAVEAQQVAAQQAAEAQQETAGAQSAQ). The segment covering 210–261 (DEARAAAERAAQREAAKKAEDAAREAADKTRAEQEEIRKRREAAEAEARAIR) has biased composition (basic and acidic residues). Residues 277–286 (PPKPVEPPKP) are compositionally biased toward pro residues. Over residues 298-325 (KPAGASAARPAVKKPAGAAPATTAPAGA) the composition is skewed to low complexity. The segment covering 355–368 (SSGGVDRGWRGGPK) has biased composition (gly residues). One can recognise a tr-type G domain in the interval 471–640 (PRPPVVTVMG…LLQAEVLELK (170 aa)). The interval 480 to 487 (GHVDHGKT) is G1. 480-487 (GHVDHGKT) is a GTP binding site. Positions 505-509 (GITQH) are G2. The interval 526-529 (DTPG) is G3. GTP-binding positions include 526-530 (DTPGH) and 580-583 (NKID). A G4 region spans residues 580–583 (NKID). A G5 region spans residues 616 to 618 (SAK).

Belongs to the TRAFAC class translation factor GTPase superfamily. Classic translation factor GTPase family. IF-2 subfamily.

The protein localises to the cytoplasm. One of the essential components for the initiation of protein synthesis. Protects formylmethionyl-tRNA from spontaneous hydrolysis and promotes its binding to the 30S ribosomal subunits. Also involved in the hydrolysis of GTP during the formation of the 70S ribosomal complex. The sequence is that of Translation initiation factor IF-2 from Burkholderia ambifaria (strain ATCC BAA-244 / DSM 16087 / CCUG 44356 / LMG 19182 / AMMD) (Burkholderia cepacia (strain AMMD)).